A 395-amino-acid polypeptide reads, in one-letter code: Indoleacetate--lysine synthetase (395 aa).

It belongs to the ATP-dependent AMP-binding enzyme family.

The enzyme catalyses (indol-3-yl)acetate + L-lysine + ATP = N(6)-[(indole-3-yl)acetyl]-L-lysine + ADP + phosphate + H(+). Functionally, conversion of IAA to IAA-lysine. The chain is Indoleacetate--lysine synthetase (iaaL) from Pseudomonas savastanoi (Pseudomonas syringae pv. savastanoi).